The following is a 234-amino-acid chain: ATP synthase subunit delta, chloroplastic (234 aa).

The N-terminal 47 residues, 1-47, are a transit peptide targeting the chloroplast; sequence MASLQQTLFSLQSKLPPSSFQIARSLPLRKTFPIRINNGGNAAGARM. N-acetylserine is present on S48. A glycan (N-linked (GlcNAc...) asparagine) is linked at N66. T234 is modified (phosphothreonine).

Belongs to the ATPase delta chain family. In terms of assembly, F-type ATPases have 2 components, F(1) - the catalytic core - and F(0) - the membrane proton channel. F(1) has five subunits: alpha(3), beta(3), gamma(1), delta(1), epsilon(1). CF(0) has four main subunits: a(1), b(1), b'(1) and c(10-14). The alpha and beta chains form an alternating ring which encloses part of the gamma chain. F(1) is attached to F(0) by a central stalk formed by the gamma and epsilon chains, while a peripheral stalk is formed by the delta, b and b' chains.

Its subcellular location is the plastid. It localises to the chloroplast thylakoid membrane. Functionally, f(1)F(0) ATP synthase produces ATP from ADP in the presence of a proton or sodium gradient. F-type ATPases consist of two structural domains, F(1) containing the extramembraneous catalytic core and F(0) containing the membrane proton channel, linked together by a central stalk and a peripheral stalk. During catalysis, ATP synthesis in the catalytic domain of F(1) is coupled via a rotary mechanism of the central stalk subunits to proton translocation (Potential). Essential for photosynthesis, probably by facilitating electron transport in both photosystems I and II. Its function is as follows. This protein is part of the stalk that links CF(0) to CF(1). It either transmits conformational changes from CF(0) to CF(1) or is implicated in proton conduction. This chain is ATP synthase subunit delta, chloroplastic, found in Arabidopsis thaliana (Mouse-ear cress).